The primary structure comprises 86 residues: Large ribosomal subunit protein bL27 (86 aa).

Residues 1–21 (MAHKKGGGSSRNGRDSESKRL) are disordered.

This sequence belongs to the bacterial ribosomal protein bL27 family.

The chain is Large ribosomal subunit protein bL27 from Rubrobacter xylanophilus (strain DSM 9941 / JCM 11954 / NBRC 16129 / PRD-1).